A 365-amino-acid polypeptide reads, in one-letter code: MSIEIANIKKSFGRTQVLNDISLDIPSGQMVALLGPSGSGKTTLLRIIAGLEHQTSGHIRFHGTDVSRLHARDRKVGFVFQHYALFRHMTVFDNIAFGLTVLPRRERPNAAAIKAKVTKLLEMVQLAHLADRYPAQLSGGQKQRVALARALAVEPQILLLDEPFGALDAQVRKELRRWLRQLHEELKFTSVFVTHDQEEATEVADRVVVMSQGNIEQADAPDQVWREPATRFVLEFMGEVNRLQGTIRGGQFHVGAHRWPLGYTPAYQGPVDLFLRPWEVDISRRTSLDSPLPVQVLEASPKGHYTQLVVQPLGWYNEPLTVVMHGDDAPQRGERLFVGLQHARLYNGDERIEPRDEELALAQSA.

In terms of domain architecture, ABC transporter spans 3-237 (IEIANIKKSF…PATRFVLEFM (235 aa)). 35–42 (GPSGSGKT) is a binding site for ATP.

The protein belongs to the ABC transporter superfamily. Sulfate/tungstate importer (TC 3.A.1.6) family. The complex is composed of two ATP-binding proteins (CysA), two transmembrane proteins (CysT and CysW) and a solute-binding protein (CysP).

The protein resides in the cell inner membrane. It carries out the reaction sulfate(out) + ATP + H2O = sulfate(in) + ADP + phosphate + H(+). The enzyme catalyses thiosulfate(out) + ATP + H2O = thiosulfate(in) + ADP + phosphate + H(+). Its function is as follows. Part of the ABC transporter complex CysAWTP involved in sulfate/thiosulfate import. Responsible for energy coupling to the transport system. The sequence is that of Sulfate/thiosulfate import ATP-binding protein CysA from Escherichia coli O157:H7.